The sequence spans 471 residues: Alpha-amylase (471 aa).

Glutamine 1 bears the Pyrrolidone carboxylic acid mark. Cysteine 28 and cysteine 84 are oxidised to a cystine. Ca(2+) is bound by residues asparagine 98, arginine 146, and aspartate 155. Cysteine 134 and cysteine 148 form a disulfide bridge. Residue arginine 183 participates in chloride binding. Residue aspartate 185 is the Nucleophile of the active site. Histidine 189 serves as a coordination point for Ca(2+). Glutamate 222 acts as the Proton donor in catalysis. Residues asparagine 285 and arginine 321 each coordinate chloride. A compositionally biased stretch (polar residues) spans 326–343; sequence FDFTDNDQGPPQDGSGNL. Positions 326 to 346 are disordered; the sequence is FDFTDNDQGPPQDGSGNLISP. 2 disulfides stabilise this stretch: cysteine 354-cysteine 360 and cysteine 425-cysteine 437.

Belongs to the glycosyl hydrolase 13 family. In terms of assembly, monomer. It depends on Ca(2+) as a cofactor. The cofactor is chloride.

The enzyme catalyses Endohydrolysis of (1-&gt;4)-alpha-D-glucosidic linkages in polysaccharides containing three or more (1-&gt;4)-alpha-linked D-glucose units.. In Tenebrio molitor (Yellow mealworm beetle), this protein is Alpha-amylase.